A 251-amino-acid polypeptide reads, in one-letter code: Ribosomal RNA small subunit methyltransferase G (251 aa).

Residues glycine 74, phenylalanine 79, 125–126, and arginine 144 each bind S-adenosyl-L-methionine; that span reads AE. Residues 224–251 form a disordered region; sequence RPAGLPTQHPLGAIEGAPRVESEEPEEP.

This sequence belongs to the methyltransferase superfamily. RNA methyltransferase RsmG family.

The protein resides in the cytoplasm. In terms of biological role, specifically methylates the N7 position of a guanine in 16S rRNA. This is Ribosomal RNA small subunit methyltransferase G from Gloeobacter violaceus (strain ATCC 29082 / PCC 7421).